Reading from the N-terminus, the 135-residue chain is S-adenosylmethionine decarboxylase proenzyme (135 aa).

Residue serine 64 is the Schiff-base intermediate with substrate; via pyruvic acid of the active site. At serine 64 the chain carries Pyruvic acid (Ser); by autocatalysis. Histidine 69 functions as the Proton acceptor; for processing activity in the catalytic mechanism. Catalysis depends on cysteine 84, which acts as the Proton donor; for catalytic activity.

Belongs to the prokaryotic AdoMetDC family. Type 1 subfamily. Heterotetramer of two alpha and two beta chains arranged as a dimer of alpha/beta heterodimers. Pyruvate serves as cofactor. Post-translationally, is synthesized initially as an inactive proenzyme. Formation of the active enzyme involves a self-maturation process in which the active site pyruvoyl group is generated from an internal serine residue via an autocatalytic post-translational modification. Two non-identical subunits are generated from the proenzyme in this reaction, and the pyruvate is formed at the N-terminus of the alpha chain, which is derived from the carboxyl end of the proenzyme. The post-translation cleavage follows an unusual pathway, termed non-hydrolytic serinolysis, in which the side chain hydroxyl group of the serine supplies its oxygen atom to form the C-terminus of the beta chain, while the remainder of the serine residue undergoes an oxidative deamination to produce ammonia and the pyruvoyl group blocking the N-terminus of the alpha chain.

The enzyme catalyses S-adenosyl-L-methionine + H(+) = S-adenosyl 3-(methylsulfanyl)propylamine + CO2. It participates in amine and polyamine biosynthesis; S-adenosylmethioninamine biosynthesis; S-adenosylmethioninamine from S-adenosyl-L-methionine: step 1/1. Its function is as follows. Catalyzes the decarboxylation of S-adenosylmethionine to S-adenosylmethioninamine (dcAdoMet), the propylamine donor required for the synthesis of the polyamines spermine and spermidine from the diamine putrescine. The chain is S-adenosylmethionine decarboxylase proenzyme from Aquifex aeolicus (strain VF5).